The following is a 529-amino-acid chain: MKALFAAITMAHALLQTQASLQNPNLLPTPPMGFNNWARFMCDLNETLFVETADAMAANGLLAAGYNWLNLDDCWMTHQRAPNNSLMWNTTKFPRGLPWLGSYVKAKGFRFGIYEDAGNLTCGGYPGSLGHEELDARTFADWGVEYLKLDGCNVFPEGGRTSEQQYEHLYGLWHRILSGMPHPLVFSESAPAYFANEKNLSDWYTVMDWVPRYGELARHSTDILVYAGEGSAWDSIMVNYRYNTLVARYQRPGYYNDPDFLIPDHPGLTMDEKKSHFGLWASFAAPLIISAYIPGLSEEDIGYLTNRDLIAVDQDPLAQQATLASRDDEVDVLTRSLADGSRLVSVLNRGNSSVQRVIPLQWLGLNPGQRYQARNLWDGTEKRIRKDLTVTVRSHATEIYKFTGSNGRVDAVSTGIVFNTASGNCLTGDAAGVGFAPCTGGEKQIWQVRGSELRPLSLLGECLTADGTRLSLRPCAGDEAQMWSYHISGNLKSGHEGGCLTEGHGVASCGWELNSQVFGLPSGVRVSGY.

The signal sequence occupies residues 1-19; it reads MKALFAAITMAHALLQTQA. Residues Cys-42 and Cys-74 are joined by a disulfide bond. Asn-45, Asn-83, Asn-89, and Asn-119 each carry an N-linked (GlcNAc...) asparagine glycan. Cys-122 and Cys-152 are disulfide-bonded. Asp-150 acts as the Nucleophile in catalysis. Asn-199 carries an N-linked (GlcNAc...) asparagine glycan. The active-site Proton donor is the Asp-208. An N-linked (GlcNAc...) asparagine glycan is attached at Asn-351. A Ricin B-type lectin domain is found at 408–528; sequence RVDAVSTGIV…GLPSGVRVSG (121 aa). Intrachain disulfides connect Cys-425/Cys-438 and Cys-462/Cys-475.

The protein belongs to the glycosyl hydrolase 27 family.

Its subcellular location is the secreted. It catalyses the reaction Hydrolysis of terminal, non-reducing alpha-D-galactose residues in alpha-D-galactosides, including galactose oligosaccharides, galactomannans and galactolipids.. In terms of biological role, hydrolyzes a variety of simple alpha-D-galactoside as well as more complex molecules such as oligosaccharides and polysaccharides. This is Probable alpha-galactosidase A (aglA) from Aspergillus terreus (strain NIH 2624 / FGSC A1156).